The primary structure comprises 102 residues: Ferredoxin (102 aa).

4Fe-4S ferredoxin-type domains lie at 45–73 (VSVN…ELVE) and 74–102 (TWIE…EVMK). [4Fe-4S] cluster contacts are provided by Cys54, Cys57, Cys60, Cys64, Cys83, Cys86, Cys89, and Cys93.

It depends on [4Fe-4S] cluster as a cofactor.

The protein operates within membrane lipid metabolism; glycerophospholipid metabolism. Ferredoxin that is the specific electron donor for the geranylgeranyl reductase GGR involved in the biosynthesis of archaeal membrane lipids. In Methanosarcina acetivorans (strain ATCC 35395 / DSM 2834 / JCM 12185 / C2A), this protein is Ferredoxin.